The chain runs to 559 residues: Hepatocyte nuclear factor 1-alpha (559 aa).

One can recognise an HNF-p1 domain in the interval 13–44 (GPGRLSALQEQLIWALLGSGLSREVLVHALGE). Positions 14 to 43 (PGRLSALQEQLIWALLGSGLSREVLVHALG) are dimerization. Residues 49–62 (RVTPGAEKGDRGDG) show a composition bias toward basic and acidic residues. Residues 49 to 73 (RVTPGAEKGDRGDGESSEEGEMDFP) are disordered. Positions 78-173 (QELEALAPEE…ISQQFTNARH (96 aa)) constitute a POU-specific atypical domain. Interaction with DNA regions lie at residues 121-123 (QRE), 134-140 (HLSQHLN), 146-149 (KNQK), 192-195 (RFKW), 252-254 (RVY), and 259-262 (NRRK). The short motif at 186–194 (RKGRRNRFK) is the Nuclear localization signal element. The homeobox; HNF1-type DNA-binding region spans 188-268 (GRRNRFKWGP…NRRKEEAFRH (81 aa)). The tract at residues 492–559 (TDPEEQTDQP…IPAQMVSTAQ (68 aa)) is disordered. Positions 499-522 (DQPIQEDSLHLQSPSPVPVSSGNL) are enriched in polar residues.

It belongs to the HNF1 homeobox family. In terms of assembly, binds DNA as a dimer. Expressed in liver, intestine, spleen and kidney.

It localises to the nucleus. Functionally, transcriptional activator that regulates the tissue specific expression of multiple genes, especially in pancreas and liver. Binds to the promoter of the albumin gene. The sequence is that of Hepatocyte nuclear factor 1-alpha (hnf1a) from Salmo salar (Atlantic salmon).